The following is a 170-amino-acid chain: Acetyl-CoA decarbonylase/synthase complex subunit epsilon 1 (170 aa).

It belongs to the CdhB family. As to quaternary structure, heterotetramer of two alpha and two epsilon subunits. The ACDS complex is made up of alpha, epsilon, beta, gamma and delta subunits with a probable stoichiometry of (alpha(2)epsilon(2))(4)-beta(8)-(gamma(1)delta(1))(8).

It functions in the pathway one-carbon metabolism; methanogenesis from acetate. Part of a complex that catalyzes the reversible cleavage of acetyl-CoA, allowing growth on acetate as sole source of carbon and energy. The alpha-epsilon subcomponent functions as a carbon monoxide dehydrogenase. The precise role of the epsilon subunit is unclear; it may have a stabilizing role within the alpha(2)epsilon(2) component and/or be involved in electron transfer to FAD during a potential FAD-mediated CO oxidation. This Methanosarcina acetivorans (strain ATCC 35395 / DSM 2834 / JCM 12185 / C2A) protein is Acetyl-CoA decarbonylase/synthase complex subunit epsilon 1 (cdhB1).